The sequence spans 340 residues: tRNA N6-adenosine threonylcarbamoyltransferase (340 aa).

His113 and His117 together coordinate Fe cation. Residues 135-139 (LVSGG), Asp169, Gly182, Asp186, and Asn274 each bind substrate. Asp302 is a binding site for Fe cation.

Belongs to the KAE1 / TsaD family. Fe(2+) serves as cofactor.

It is found in the cytoplasm. It carries out the reaction L-threonylcarbamoyladenylate + adenosine(37) in tRNA = N(6)-L-threonylcarbamoyladenosine(37) in tRNA + AMP + H(+). Functionally, required for the formation of a threonylcarbamoyl group on adenosine at position 37 (t(6)A37) in tRNAs that read codons beginning with adenine. Is involved in the transfer of the threonylcarbamoyl moiety of threonylcarbamoyl-AMP (TC-AMP) to the N6 group of A37, together with TsaE and TsaB. TsaD likely plays a direct catalytic role in this reaction. This Mycolicibacterium gilvum (strain PYR-GCK) (Mycobacterium gilvum (strain PYR-GCK)) protein is tRNA N6-adenosine threonylcarbamoyltransferase.